A 297-amino-acid chain; its full sequence is Quinate/shikimate dehydrogenase (297 aa).

Residues K80 and D116 each coordinate substrate. NAD(+) is bound by residues 141 to 144, 164 to 167, K214, 241 to 244, and G264; these read AGGA, NRRD, and CVYN.

Belongs to the shikimate dehydrogenase family. Homodimer.

The catalysed reaction is L-quinate + NAD(+) = 3-dehydroquinate + NADH + H(+). It catalyses the reaction L-quinate + NADP(+) = 3-dehydroquinate + NADPH + H(+). The enzyme catalyses shikimate + NADP(+) = 3-dehydroshikimate + NADPH + H(+). It carries out the reaction shikimate + NAD(+) = 3-dehydroshikimate + NADH + H(+). The protein operates within metabolic intermediate biosynthesis; chorismate biosynthesis; chorismate from D-erythrose 4-phosphate and phosphoenolpyruvate: step 4/7. Its function is as follows. The actual biological function of YdiB remains unclear, nor is it known whether 3-dehydroshikimate or quinate represents the natural substrate. Catalyzes the reversible NAD-dependent reduction of both 3-dehydroshikimate (DHSA) and 3-dehydroquinate to yield shikimate (SA) and quinate, respectively. It can use both NAD or NADP for catalysis, however it has higher catalytic efficiency with NAD. The chain is Quinate/shikimate dehydrogenase from Shigella dysenteriae serotype 1 (strain Sd197).